The following is a 154-amino-acid chain: UPF0178 protein Glov_0658 (154 aa).

This sequence belongs to the UPF0178 family.

The chain is UPF0178 protein Glov_0658 from Trichlorobacter lovleyi (strain ATCC BAA-1151 / DSM 17278 / SZ) (Geobacter lovleyi).